A 532-amino-acid chain; its full sequence is Deoxyribodipyrimidine photo-lyase (532 aa).

Positions Met-1 to Gly-57 are disordered. Basic residues predominate over residues Ala-24–Phe-34. Residues Gln-41–Ala-55 show a composition bias toward basic and acidic residues. One can recognise a Photolyase/cryptochrome alpha/beta domain in the interval Gln-97–Cys-229. Arg-322 contributes to the DNA binding site. 2 interaction with DNA regions span residues Glu-368–Ala-376 and Gly-442–Phe-443. Tyr-468–Asn-470 contacts FAD.

Belongs to the DNA photolyase class-2 family. Requires FAD as cofactor.

It catalyses the reaction cyclobutadipyrimidine (in DNA) = 2 pyrimidine residues (in DNA).. Involved in repair of UV radiation-induced DNA damage. Catalyzes the light-dependent monomerization (300-600 nm) of cyclobutyl pyrimidine dimers (in cis-syn configuration), which are formed between adjacent bases on the same DNA strand upon exposure to ultraviolet radiation. This is Deoxyribodipyrimidine photo-lyase (PHR) from Potorous tridactylus (Potoroo).